The following is a 427-amino-acid chain: Bifunctional enzyme MtnB/MtnX (427 aa).

An HK-MTPenyl-1-P phosphatase region spans residues 1–221 (MRKPLIICDF…LEETAEVKEW (221 aa)). Residues 222-427 (MSEQKRQELA…KLKALQAYHV (206 aa)) are MTRu-1-P dehydratase. Zn(2+) is bound by residues histidine 317 and histidine 319.

This sequence in the N-terminal section; belongs to the HAD-like hydrolase superfamily. MtnX family. The protein in the C-terminal section; belongs to the aldolase class II family. MtnB subfamily. In terms of assembly, homotetramer. Zn(2+) is required as a cofactor.

The enzyme catalyses 5-(methylsulfanyl)-D-ribulose 1-phosphate = 5-methylsulfanyl-2,3-dioxopentyl phosphate + H2O. It carries out the reaction 2-hydroxy-5-methylsulfanyl-3-oxopent-1-enyl phosphate + H2O = 1,2-dihydroxy-5-(methylsulfanyl)pent-1-en-3-one + phosphate. It participates in amino-acid biosynthesis; L-methionine biosynthesis via salvage pathway; L-methionine from S-methyl-5-thio-alpha-D-ribose 1-phosphate: step 2/6. It functions in the pathway amino-acid biosynthesis; L-methionine biosynthesis via salvage pathway; L-methionine from S-methyl-5-thio-alpha-D-ribose 1-phosphate: step 4/6. Functionally, catalyzes the dehydration of methylthioribulose-1-phosphate (MTRu-1-P) into 2,3-diketo-5-methylthiopentyl-1-phosphate (DK-MTP-1-P). Its function is as follows. Dephosphorylates 2-hydroxy-3-keto-5-methylthiopentenyl-1-phosphate (HK-MTPenyl-1-P) yielding 1,2-dihydroxy-3-keto-5-methylthiopentene (DHK-MTPene). The chain is Bifunctional enzyme MtnB/MtnX (mtnB/mtnX) from Bacillus licheniformis (strain ATCC 14580 / DSM 13 / JCM 2505 / CCUG 7422 / NBRC 12200 / NCIMB 9375 / NCTC 10341 / NRRL NRS-1264 / Gibson 46).